Reading from the N-terminus, the 139-residue chain is ATP synthase epsilon chain (139 aa).

The protein belongs to the ATPase epsilon chain family. As to quaternary structure, F-type ATPases have 2 components, CF(1) - the catalytic core - and CF(0) - the membrane proton channel. CF(1) has five subunits: alpha(3), beta(3), gamma(1), delta(1), epsilon(1). CF(0) has three main subunits: a, b and c.

The protein localises to the cell membrane. Produces ATP from ADP in the presence of a proton gradient across the membrane. In Pediococcus pentosaceus (strain ATCC 25745 / CCUG 21536 / LMG 10740 / 183-1w), this protein is ATP synthase epsilon chain.